We begin with the raw amino-acid sequence, 179 residues long: Large ribosomal subunit protein uL5 (179 aa).

Belongs to the universal ribosomal protein uL5 family. In terms of assembly, part of the 50S ribosomal subunit; contacts the 5S rRNA and probably tRNA. Forms a bridge to the 30S subunit in the 70S ribosome.

In terms of biological role, this is one of the proteins that bind and probably mediate the attachment of the 5S RNA into the large ribosomal subunit, where it forms part of the central protuberance. In the 70S ribosome it contacts protein S13 of the 30S subunit (bridge B1b), connecting the 2 subunits; this bridge is implicated in subunit movement. May contact the P site tRNA; the 5S rRNA and some of its associated proteins might help stabilize positioning of ribosome-bound tRNAs. This chain is Large ribosomal subunit protein uL5, found in Pyrobaculum aerophilum (strain ATCC 51768 / DSM 7523 / JCM 9630 / CIP 104966 / NBRC 100827 / IM2).